Here is a 126-residue protein sequence, read N- to C-terminus: Large ribosomal subunit protein bL19 (126 aa).

It belongs to the bacterial ribosomal protein bL19 family.

This protein is located at the 30S-50S ribosomal subunit interface and may play a role in the structure and function of the aminoacyl-tRNA binding site. The sequence is that of Large ribosomal subunit protein bL19 from Albidiferax ferrireducens (strain ATCC BAA-621 / DSM 15236 / T118) (Rhodoferax ferrireducens).